Consider the following 197-residue polypeptide: Probable nicotinate-nucleotide adenylyltransferase (197 aa).

This sequence belongs to the NadD family.

The enzyme catalyses nicotinate beta-D-ribonucleotide + ATP + H(+) = deamido-NAD(+) + diphosphate. It functions in the pathway cofactor biosynthesis; NAD(+) biosynthesis; deamido-NAD(+) from nicotinate D-ribonucleotide: step 1/1. Its function is as follows. Catalyzes the reversible adenylation of nicotinate mononucleotide (NaMN) to nicotinic acid adenine dinucleotide (NaAD). The protein is Probable nicotinate-nucleotide adenylyltransferase of Porphyromonas gingivalis (strain ATCC 33277 / DSM 20709 / CIP 103683 / JCM 12257 / NCTC 11834 / 2561).